We begin with the raw amino-acid sequence, 362 residues long: Phosphoserine aminotransferase (362 aa).

R43 contributes to the L-glutamate binding site. Pyridoxal 5'-phosphate is bound by residues 77–78 (AS), W103, T153, D173, and Q196. N6-(pyridoxal phosphate)lysine is present on K197. 238–239 (NT) is a binding site for pyridoxal 5'-phosphate.

This sequence belongs to the class-V pyridoxal-phosphate-dependent aminotransferase family. SerC subfamily. As to quaternary structure, homodimer. Pyridoxal 5'-phosphate serves as cofactor.

It localises to the cytoplasm. The catalysed reaction is O-phospho-L-serine + 2-oxoglutarate = 3-phosphooxypyruvate + L-glutamate. The enzyme catalyses 4-(phosphooxy)-L-threonine + 2-oxoglutarate = (R)-3-hydroxy-2-oxo-4-phosphooxybutanoate + L-glutamate. It participates in amino-acid biosynthesis; L-serine biosynthesis; L-serine from 3-phospho-D-glycerate: step 2/3. Catalyzes the reversible conversion of 3-phosphohydroxypyruvate to phosphoserine and of 3-hydroxy-2-oxo-4-phosphonooxybutanoate to phosphohydroxythreonine. The chain is Phosphoserine aminotransferase from Lysinibacillus sphaericus (strain C3-41).